A 273-amino-acid polypeptide reads, in one-letter code: Glucosamine-6-phosphate deaminase (273 aa).

D72 functions as the Proton acceptor; for enolization step in the catalytic mechanism. D141 functions as the For ring-opening step in the catalytic mechanism. H143 functions as the Proton acceptor; for ring-opening step in the catalytic mechanism. The active-site For ring-opening step is the E148.

Belongs to the glucosamine/galactosamine-6-phosphate isomerase family. Homohexamer.

The protein localises to the cytoplasm. It catalyses the reaction alpha-D-glucosamine 6-phosphate + H2O = beta-D-fructose 6-phosphate + NH4(+). It functions in the pathway nucleotide-sugar biosynthesis; UDP-N-acetyl-alpha-D-glucosamine biosynthesis; alpha-D-glucosamine 6-phosphate from D-fructose 6-phosphate: step 1/1. Functionally, catalyzes the reversible conversion of alpha-D-glucosamine 6-phosphate (GlcN-6P) into beta-D-fructose 6-phosphate (Fru-6P) and ammonium ion, a regulatory reaction step in de novo uridine diphosphate-N-acetyl-alpha-D-glucosamine (UDP-GlcNAc) biosynthesis via hexosamine pathway. The chain is Glucosamine-6-phosphate deaminase (Gnpda1) from Anopheles gambiae (African malaria mosquito).